The sequence spans 252 residues: MLIGSHVSPQDPLAAAQAEGAEVVQIFLGNPQSWKAPRPREDAAQLKAAALPIYVHAPYLINLASANNKVRIPSRKILQQTCDAAADIGAAAVIVHGGHVADDNDLDEGFQRWRKALDQLQTDVPVYLENTAGGEHAMARHFDTIARLWDVIGDTGIGFCLDTCHAWAAGEQLVHGVDRIKAVTGRIDLVHCNDSRDAAGSGRDRHANLGAGQIDPELLVAAVRAADAPIICETAEEGRKDDIAFLREKLNS.

Zn(2+) contacts are provided by histidine 56, histidine 96, glutamate 129, aspartate 162, histidine 165, histidine 191, aspartate 204, histidine 206, and glutamate 233.

It belongs to the AP endonuclease 2 family. It depends on Zn(2+) as a cofactor.

The catalysed reaction is Endonucleolytic cleavage to 5'-phosphooligonucleotide end-products.. Endonuclease IV plays a role in DNA repair. It cleaves phosphodiester bonds at apurinic or apyrimidinic (AP) sites, generating a 3'-hydroxyl group and a 5'-terminal sugar phosphate. The polypeptide is Probable endonuclease 4 (Mycobacterium ulcerans (strain Agy99)).